A 218-amino-acid chain; its full sequence is ER lumen protein-retaining receptor (218 aa).

The Lumenal segment spans residues 1 to 2 (MN). The helical transmembrane segment at 3–23 (LFSFLGDMLHLGSMLILLFKI) threads the bilayer. At 24–57 (KNDKSCAGVSLKSQILFTIVFTARYLDLFTNYVS) the chain is on the cytoplasmic side. Residues 58–78 (LYITFMKITYIAVSYYTLHLI) form a helical membrane-spanning segment. The Lumenal segment spans residues 79 to 94 (ARKYKFTYDKDHDTFK). The helical transmembrane segment at 95–115 (IVYLIASCAILSLITYDKTTI) threads the bilayer. The Cytoplasmic segment spans residues 116 to 123 (GIYSTFLE). The helical transmembrane segment at 124 to 144 (ILWTFSIYLESIAILPQLILL) threads the bilayer. At 145–152 (QRTGEVEA) the chain is on the lumenal side. Residues 153-173 (LTSNYIVLLGGYRAFYLFNWI) traverse the membrane as a helical segment. Residues 174–184 (YRITFYNWSGK) are Cytoplasmic-facing. A helical membrane pass occupies residues 185 to 205 (IEMLSGLLQTILYADFFYYYA). The Lumenal segment spans residues 206 to 218 (KSRMYGKKLVLPQ).

Belongs to the ERD2 family.

The protein localises to the endoplasmic reticulum membrane. Its function is as follows. Required for the retention of luminal endoplasmic reticulum proteins. Determines the specificity of the luminal ER protein retention system. Also required for normal vesicular traffic through the Golgi. This chain is ER lumen protein-retaining receptor (kdelr), found in Dictyostelium discoideum (Social amoeba).